The following is a 115-amino-acid chain: Holo-[acyl-carrier-protein] synthase (115 aa).

Mg(2+) is bound by residues aspartate 5 and glutamate 50.

It belongs to the P-Pant transferase superfamily. AcpS family. Mg(2+) serves as cofactor.

The protein localises to the cytoplasm. It catalyses the reaction apo-[ACP] + CoA = holo-[ACP] + adenosine 3',5'-bisphosphate + H(+). Functionally, transfers the 4'-phosphopantetheine moiety from coenzyme A to a Ser of acyl-carrier-protein. The sequence is that of Holo-[acyl-carrier-protein] synthase from Campylobacter fetus subsp. fetus (strain 82-40).